Consider the following 327-residue polypeptide: 2-methoxy-6-polyprenyl-1,4-benzoquinol methylase, mitochondrial (327 aa).

A mitochondrion-targeting transit peptide spans 1–49 (MAAPRSCVLWSYCGHGWSRLAGDCRLPGFRRSWLGATLSARSLSQEKRA). Residues Thr117, Asp171, and 199 to 200 (DA) contribute to the S-adenosyl-L-methionine site.

The protein belongs to the class I-like SAM-binding methyltransferase superfamily. MenG/UbiE family. Component of a multi-subunit COQ enzyme complex, composed of at least COQ3, COQ4, COQ5, COQ6, COQ7 and COQ9. Interacts with PYURF; the interaction is direct, stabilizes COQ5 protein and associates PYURF with COQ enzyme complex.

It is found in the mitochondrion inner membrane. It catalyses the reaction 2-methoxy-6-(all-trans-decaprenyl)benzene-1,4-diol + S-adenosyl-L-methionine = 5-methoxy-2-methyl-3-(all-trans-decaprenyl)benzene-1,4-diol + S-adenosyl-L-homocysteine + H(+). The protein operates within cofactor biosynthesis; ubiquinone biosynthesis. In terms of biological role, methyltransferase required for the conversion of 2-decaprenyl-6-methoxy-1,4-benzoquinol (DDMQH2) to 2-decaprenyl-3-methyl-6-methoxy-1,4-benzoquinol (DMQH2). The sequence is that of 2-methoxy-6-polyprenyl-1,4-benzoquinol methylase, mitochondrial from Rattus norvegicus (Rat).